The primary structure comprises 29 residues: Cytochrome b6-f complex subunit 8 (29 aa).

Residues 3 to 23 (IVSFAWAALMVVFTFSLSLVV) form a helical membrane-spanning segment.

It belongs to the PetN family. As to quaternary structure, the 4 large subunits of the cytochrome b6-f complex are cytochrome b6, subunit IV (17 kDa polypeptide, PetD), cytochrome f and the Rieske protein, while the 4 small subunits are PetG, PetL, PetM and PetN. The complex functions as a dimer.

It localises to the plastid. The protein resides in the chloroplast thylakoid membrane. In terms of biological role, component of the cytochrome b6-f complex, which mediates electron transfer between photosystem II (PSII) and photosystem I (PSI), cyclic electron flow around PSI, and state transitions. The polypeptide is Cytochrome b6-f complex subunit 8 (Phalaenopsis aphrodite subsp. formosana (Moth orchid)).